Consider the following 294-residue polypeptide: Ribosomal RNA small subunit methyltransferase A (294 aa).

The S-adenosyl-L-methionine site is built by asparagine 33, leucine 35, glycine 60, glutamate 81, aspartate 106, and asparagine 131.

It belongs to the class I-like SAM-binding methyltransferase superfamily. rRNA adenine N(6)-methyltransferase family. RsmA subfamily.

The protein resides in the cytoplasm. The catalysed reaction is adenosine(1518)/adenosine(1519) in 16S rRNA + 4 S-adenosyl-L-methionine = N(6)-dimethyladenosine(1518)/N(6)-dimethyladenosine(1519) in 16S rRNA + 4 S-adenosyl-L-homocysteine + 4 H(+). In terms of biological role, specifically dimethylates two adjacent adenosines (A1518 and A1519) in the loop of a conserved hairpin near the 3'-end of 16S rRNA in the 30S particle. May play a critical role in biogenesis of 30S subunits. This is Ribosomal RNA small subunit methyltransferase A from Lactococcus lactis subsp. lactis (strain IL1403) (Streptococcus lactis).